A 571-amino-acid polypeptide reads, in one-letter code: External alternative NAD(P)H-ubiquinone oxidoreductase B1, mitochondrial (571 aa).

The transit peptide at 1-35 directs the protein to the mitochondrion; that stretch reads MTLLSSLGRASRSAPLASKLLLLGTLSGGSIVAYA. FAD is bound at residue 51 to 81; it reads KVVVLGTGWAGISFLKDLDITSYDVQVVSPQ. NAD(+) is bound at residue 215–251; that stretch reads LHFVIVGGGPTGVEFAAELHDFIIEDITKIYPSVKEL. The 36-residue stretch at 372 to 407 folds into the EF-hand domain; sequence KILGDIANIFKAADADNSGTLTMEELEGVVDDIIVR. Ca(2+) is bound by residues aspartate 385, aspartate 387, serine 389, threonine 391, and glutamate 396. The short motif at 562-571 is the Microbody targeting signal element; sequence YIFGRDSSRI.

It belongs to the NADH dehydrogenase family. It depends on FAD as a cofactor. In terms of tissue distribution, expressed in seedlings, roots, cotyledons, leaves, stems, buds and flowers.

It is found in the mitochondrion inner membrane. The protein localises to the peroxisome. It carries out the reaction a quinone + NADH + H(+) = a quinol + NAD(+). It catalyses the reaction a ubiquinone + NADH + H(+) = a ubiquinol + NAD(+). With respect to regulation, activity is calcium-dependent with a more pronounced effect at higher pH. In terms of biological role, alternative NADH-ubiquinone oxidoreductase which catalyzes the oxidation of mitochondrial NADH does not translocate protons across the inner mitochondrial membrane. Calcium-dependent NAD(P)H dehydrogenase. Binds calcium ions. The protein is External alternative NAD(P)H-ubiquinone oxidoreductase B1, mitochondrial (NDB1) of Arabidopsis thaliana (Mouse-ear cress).